The following is a 350-amino-acid chain: Glyoxylate reductase 1 (350 aa).

A Phosphothreonine modification is found at Thr31. Residues 173–174 (RI), 252–254 (TAR), and Asp278 contribute to the NAD(+) site. The active site involves Arg254. Glu283 is an active-site residue. His301 serves as the catalytic Proton donor. An NAD(+)-binding site is contributed by 301–304 (HMGT).

Belongs to the D-isomer specific 2-hydroxyacid dehydrogenase family.

The protein localises to the cytoplasm. It localises to the nucleus. The protein resides in the mitochondrion. The catalysed reaction is glycolate + NAD(+) = glyoxylate + NADH + H(+). The enzyme catalyses glycolate + NADP(+) = glyoxylate + NADPH + H(+). It catalyses the reaction (R)-glycerate + NAD(+) = 3-hydroxypyruvate + NADH + H(+). It carries out the reaction (R)-glycerate + NADP(+) = 3-hydroxypyruvate + NADPH + H(+). In terms of biological role, glyoxylate reductase that reversibly reduces glyoxylate to glycolate, or alternatively hydroxypyruvate to D-glycerate, using either NADPH or NADH as a cosubstrate. Does not act as a hydroxyisocaproate dehydrogenase even though it also has minor activity on alpha-ketoisocaproate. This Saccharomyces cerevisiae (strain ATCC 204508 / S288c) (Baker's yeast) protein is Glyoxylate reductase 1.